A 683-amino-acid polypeptide reads, in one-letter code: Phosphomethylpyrimidine synthase (683 aa).

Residues Asn235, Met264, Tyr293, His329, 349 to 351 (SRG), 390 to 393 (DGMR), and Glu429 contribute to the substrate site. His433 lines the Zn(2+) pocket. Tyr456 serves as a coordination point for substrate. His497 provides a ligand contact to Zn(2+). [4Fe-4S] cluster contacts are provided by Cys577, Cys580, and Cys585. Positions 647–683 (RQSPGVESTSLESTSLESTVLESTSLESTALEKAKEV) are disordered. A compositionally biased stretch (low complexity) spans 653–675 (ESTSLESTSLESTVLESTSLEST).

This sequence belongs to the ThiC family. Homodimer. [4Fe-4S] cluster serves as cofactor.

It catalyses the reaction 5-amino-1-(5-phospho-beta-D-ribosyl)imidazole + S-adenosyl-L-methionine = 4-amino-2-methyl-5-(phosphooxymethyl)pyrimidine + CO + 5'-deoxyadenosine + formate + L-methionine + 3 H(+). Its pathway is cofactor biosynthesis; thiamine diphosphate biosynthesis. Catalyzes the synthesis of the hydroxymethylpyrimidine phosphate (HMP-P) moiety of thiamine from aminoimidazole ribotide (AIR) in a radical S-adenosyl-L-methionine (SAM)-dependent reaction. The protein is Phosphomethylpyrimidine synthase of Shewanella loihica (strain ATCC BAA-1088 / PV-4).